The sequence spans 146 residues: UPF0260 protein Sbal_1871 (146 aa).

It belongs to the UPF0260 family.

This Shewanella baltica (strain OS155 / ATCC BAA-1091) protein is UPF0260 protein Sbal_1871.